Here is a 461-residue protein sequence, read N- to C-terminus: UPF0053 protein YhdT (461 aa).

In terms of domain architecture, CNNM transmembrane spans 1-202 (MDDIDSLILI…LKNGEINPSE (202 aa)). A run of 3 helical transmembrane segments spans residues 8–28 (ILIG…FAIV), 103–123 (VSFA…GELA), and 137–157 (LLIA…IWIL). CBS domains follow at residues 221–280 (MIPR…MTEE) and 290–347 (YVRP…IRDE).

It belongs to the UPF0053 family.

It is found in the cell membrane. The chain is UPF0053 protein YhdT (yhdT) from Bacillus subtilis (strain 168).